The sequence spans 199 residues: NAD(P)H dehydrogenase (quinone) (199 aa).

The Flavodoxin-like domain maps to 4–190; it reads VLVLYYSAYG…EAAKYQGAHV (187 aa). Residues 10–15 and 78–80 each bind FMN; these read SAYGHI and TRF. An NAD(+)-binding site is contributed by tyrosine 12. A substrate-binding site is contributed by tryptophan 98. Residues 113-119 and histidine 134 contribute to the FMN site; that span reads SSATQHG.

This sequence belongs to the WrbA family. FMN serves as cofactor.

It catalyses the reaction a quinone + NADH + H(+) = a quinol + NAD(+). The enzyme catalyses a quinone + NADPH + H(+) = a quinol + NADP(+). The polypeptide is NAD(P)H dehydrogenase (quinone) (Rhizobium rhizogenes (strain K84 / ATCC BAA-868) (Agrobacterium radiobacter)).